The chain runs to 166 residues: Cytochrome P450 regulator dap1 (166 aa).

Residues 4 to 21 form a helical membrane-spanning segment; the sequence is TQVVFIVTLFLYLLITRW. In terms of domain architecture, Cytochrome b5 heme-binding spans 42–145; the sequence is DYTPAELKEY…QKYQAVGRLI (104 aa). S108 is modified (phosphoserine). Y138 is a heme binding site.

The protein belongs to the cytochrome b5 family. MAPR subfamily. Interacts with erg5 and erg11.

It localises to the endoplasmic reticulum. The protein resides in the membrane. Its function is as follows. Required for sterol biosynthesis. Functions as a positive regulator of cytochrome P450 enzymes erg5 and erg11. Function requires bound heme. The sequence is that of Cytochrome P450 regulator dap1 (dap1) from Schizosaccharomyces pombe (strain 972 / ATCC 24843) (Fission yeast).